Here is a 246-residue protein sequence, read N- to C-terminus: Carboxy-S-adenosyl-L-methionine synthase (246 aa).

S-adenosyl-L-methionine-binding positions include Tyr-39, 64-66 (GCS), 89-90 (DN), 121-122 (DI), Asn-136, and Arg-203.

The protein belongs to the class I-like SAM-binding methyltransferase superfamily. Cx-SAM synthase family. Homodimer.

It carries out the reaction prephenate + S-adenosyl-L-methionine = carboxy-S-adenosyl-L-methionine + 3-phenylpyruvate + H2O. Its function is as follows. Catalyzes the conversion of S-adenosyl-L-methionine (SAM) to carboxy-S-adenosyl-L-methionine (Cx-SAM). The polypeptide is Carboxy-S-adenosyl-L-methionine synthase (Pseudomonas aeruginosa (strain UCBPP-PA14)).